A 142-amino-acid chain; its full sequence is Large ribosomal subunit protein uL11 (142 aa).

The protein belongs to the universal ribosomal protein uL11 family. As to quaternary structure, part of the ribosomal stalk of the 50S ribosomal subunit. Interacts with L10 and the large rRNA to form the base of the stalk. L10 forms an elongated spine to which L12 dimers bind in a sequential fashion forming a multimeric L10(L12)X complex. One or more lysine residues are methylated.

Functionally, forms part of the ribosomal stalk which helps the ribosome interact with GTP-bound translation factors. This Klebsiella pneumoniae subsp. pneumoniae (strain ATCC 700721 / MGH 78578) protein is Large ribosomal subunit protein uL11.